A 237-amino-acid chain; its full sequence is Photosystem I-associated linker protein CpcL (237 aa).

The region spanning 11–191 (TTQNQRVQSF…DYRDRAGIVR (181 aa)) is the PBS-linker domain. A helical membrane pass occupies residues 208 to 228 (GVAILGVLLAISAGMTFLFVL).

The protein belongs to the phycobilisome linker protein family. As to quaternary structure, part of a specialized phycobilisome (PBS), a structure that is usually composed of two distinct substructures: a core complex and a number of rods radiating from the core. This protein is part of a core-less PBS rod (called CpcL-PBS). In vegetative cells associated substoichiometrically with photosystem I and phycobiliproteins phycocyanin as well as phycoerythrocyanin in the thylakoid membrane, not found in conventional, hemidiscoidal phycobilisomes.

Its subcellular location is the cellular thylakoid membrane. Its function is as follows. Rod linker protein, associated with phycocyanin (PC). Linker polypeptides determine the state of aggregation and the location of the disk-shaped phycobiliprotein units within the phycobilisome (PBS) and modulate their spectroscopic properties in order to mediate a directed and optimal energy transfer. Forms a supercomplex with tetrameric photosystem I (PSI) and PC that allows efficient energy transfer from PC to PSI. This protein seems to be in the middle of the PC hexameric rod and may anchor the PC rods at the periphery of PSI tetramers. May be involved in the cyclic electron transport around PSI that provides ATP needed for N(2) fixation in heterocysts. The protein is Photosystem I-associated linker protein CpcL of Nostoc sp. (strain PCC 7120 / SAG 25.82 / UTEX 2576).